Consider the following 310-residue polypeptide: MKTLIRKFSRTAITVVLVILAFIAIFNAWVYYTESPWTRDARFSADVVAIAPDVSGLITQVNVHDNQLVKKGQVLFIIDQPRYQKALEEAQADVAYYQVLAQEKRQEAGRRNRLGVQAMSREEIDQANNVLQTVLHQLAKAQATRDLAKLDLERTVIRAPADGWVTNLNVYTGEFITRGSTAVALVKQNSFYVLAYMEETKLEGVRPGYRAEITPLGSNKVLKGTVDSVAAGVTNASSTRDDKGMATIDSNLEWVRLAQRVPVRIRLDNQQENIWPAGTTATVVVTGKQDRDESQDSFFRKMAHRLREFG.

Residues 12 to 32 (AITVVLVILAFIAIFNAWVYY) traverse the membrane as a helical segment.

This sequence belongs to the membrane fusion protein (MFP) (TC 8.A.1) family.

The protein localises to the cell inner membrane. Its function is as follows. Forms an efflux pump with AaeB. This Escherichia coli O7:K1 (strain IAI39 / ExPEC) protein is p-hydroxybenzoic acid efflux pump subunit AaeA.